Reading from the N-terminus, the 326-residue chain is MFISISAGIVTFLLTLVGIPAFIQFYRKAQITGQQMHEDVKQHQAKAGTPTMGGLIFLIAAVVVSFLVALFSKQLTNNVGMILFILVLYGLVGFLDDFLKVFRKINEGLNPKQKLALQLLGGVIFYLFYERGGDMLSIFGYQVHLGIFYIVFALFWLVGFSNAVNLTDGIDGLASISVVISLSAYGVIAYVQGQMDILLVILAMIGGLLGFFVFNHKPAKVFMGDVGSLALGGMLAAISMALHQEWTLLIIGIVYVFETTSVMMQVSYFKLTGGKRIFRMTPVHHHFELGGLSGKGNPWSEWKVDFFFWGVGLLASLLTLAILYLR.

The next 9 helical transmembrane spans lie at Ile-3–Ile-23, Thr-51–Phe-71, Val-79–Leu-99, Leu-115–Met-135, Ile-138–Val-158, Gly-169–Ala-189, Met-195–Asn-215, Val-221–His-243, and Val-304–Tyr-324.

This sequence belongs to the glycosyltransferase 4 family. MraY subfamily. It depends on Mg(2+) as a cofactor.

Its subcellular location is the cell membrane. It catalyses the reaction UDP-N-acetyl-alpha-D-muramoyl-L-alanyl-gamma-D-glutamyl-L-lysyl-D-alanyl-D-alanine + di-trans,octa-cis-undecaprenyl phosphate = Mur2Ac(oyl-L-Ala-gamma-D-Glu-L-Lys-D-Ala-D-Ala)-di-trans,octa-cis-undecaprenyl diphosphate + UMP. Its pathway is cell wall biogenesis; peptidoglycan biosynthesis. Catalyzes the initial step of the lipid cycle reactions in the biosynthesis of the cell wall peptidoglycan: transfers peptidoglycan precursor phospho-MurNAc-pentapeptide from UDP-MurNAc-pentapeptide onto the lipid carrier undecaprenyl phosphate, yielding undecaprenyl-pyrophosphoryl-MurNAc-pentapeptide, known as lipid I. In Streptococcus pneumoniae (strain Hungary19A-6), this protein is Phospho-N-acetylmuramoyl-pentapeptide-transferase.